The sequence spans 162 residues: MRRAACPGSFDPITNGHLDIIVRASRLFDEVVVAVSINKNKVTLFTVDERMELIREALRDHPMAPSNVLVDASHGLIVDFCRSRGIQSIVKGLRAVSDFDYELQMAQMNNSLAGVETLFMSTNPQYAFLSSSLVKEVARYGGDVSGLVPDVVLKQLRERLAQ.

A substrate-binding site is contributed by Ser9. ATP contacts are provided by residues 9–10 (SF) and His17. Substrate-binding residues include Lys41, Ile77, and Lys91. Residues 92-94 (GLR), Glu102, and 126-132 (YAFLSSS) contribute to the ATP site.

It belongs to the bacterial CoaD family. Homohexamer. Mg(2+) is required as a cofactor.

The protein resides in the cytoplasm. It catalyses the reaction (R)-4'-phosphopantetheine + ATP + H(+) = 3'-dephospho-CoA + diphosphate. The protein operates within cofactor biosynthesis; coenzyme A biosynthesis; CoA from (R)-pantothenate: step 4/5. Its function is as follows. Reversibly transfers an adenylyl group from ATP to 4'-phosphopantetheine, yielding dephospho-CoA (dPCoA) and pyrophosphate. The polypeptide is Phosphopantetheine adenylyltransferase (Frankia casuarinae (strain DSM 45818 / CECT 9043 / HFP020203 / CcI3)).